We begin with the raw amino-acid sequence, 498 residues long: Glycerol kinase (498 aa).

T12 contacts ADP. ATP is bound by residues T12, T13, and S14. T12 is a binding site for sn-glycerol 3-phosphate. ADP is bound at residue R16. R82, E83, Y134, and D244 together coordinate sn-glycerol 3-phosphate. Glycerol-binding residues include R82, E83, Y134, D244, and Q245. ADP is bound by residues T266 and G310. T266, G310, Q314, and G411 together coordinate ATP. ADP contacts are provided by G411 and N415.

Belongs to the FGGY kinase family.

It catalyses the reaction glycerol + ATP = sn-glycerol 3-phosphate + ADP + H(+). Its pathway is polyol metabolism; glycerol degradation via glycerol kinase pathway; sn-glycerol 3-phosphate from glycerol: step 1/1. With respect to regulation, inhibited by fructose 1,6-bisphosphate (FBP). Functionally, key enzyme in the regulation of glycerol uptake and metabolism. Catalyzes the phosphorylation of glycerol to yield sn-glycerol 3-phosphate. This is Glycerol kinase from Chloroflexus aurantiacus (strain ATCC 29364 / DSM 637 / Y-400-fl).